The chain runs to 1948 residues: [F-actin]-monooxygenase MICAL2 (1948 aa).

Residues 2–494 are monooxygenase domain; the sequence is GENEDEKQAQ…KHLYITKEMD (493 aa). FAD-binding positions include Cys97, 116-118, 123-125, Phe183, Tyr298, and Asp398; these read EKR and RNN. Positions 516–619 constitute a Calponin-homology (CH) domain; the sequence is DIRPNKLLTW…MVMYLSKFYE (104 aa). Ser631 carries the post-translational modification Phosphoserine. The short motif at 660–681 is the Nuclear localization signal element; it reads RKRTPRVDAQTEENDVNKRRRQ. Disordered regions lie at residues 664–709, 753–776, and 891–923; these read PRVD…ESGN, SRPP…PPLK, and KRVP…DSVS. The span at 693–709 shows a compositional bias: polar residues; that stretch reads SSRSLGSSQEYAKESGN. A compositionally biased stretch (pro residues) spans 896–917; the sequence is AHPPSPPSCLPSPDPAAAPSPP. Residues 980-1042 form the LIM zinc-binding domain; that stretch reads DTCYFCKKRV…KLHFAHCKTS (63 aa). Residues Cys982, Cys985, His1003, Cys1006, Cys1009, Cys1012, Cys1032, and His1035 each coordinate Zn(2+). Disordered regions lie at residues 1045-1134, 1146-1185, and 1233-1298; these read QRKR…GQDG, SEDS…QPLT, and QSNS…DDVS. The span at 1050–1059 shows a compositional bias: basic and acidic residues; it reads AELNQQREEE. The segment covering 1233–1243 has biased composition (polar residues); that stretch reads QSNSTPMNQRA. Low complexity predominate over residues 1254–1271; sequence SSSSSPSLPSSFSSASVP. A compositionally biased stretch (polar residues) spans 1277–1292; the sequence is DSSSPQVTYNLHSPQI. Residues 1300 to 1339 are interaction with MAPK1; that stretch reads TPIYLRRARAQGITKEIPLYLPHSPMLESTEHCLVSPDGE. 4 disordered regions span residues 1478–1505, 1519–1622, 1672–1726, and 1739–1767; these read QKKA…KSPL, SSEA…SSKV, GDFF…QAGK, and SGPG…QLSS. Over residues 1522–1534 the composition is skewed to basic and acidic residues; the sequence is AGKKTSSKPETKT. A compositionally biased stretch (low complexity) spans 1570 to 1579; it reads KASAFFSLAS. Polar residues predominate over residues 1580 to 1591; the sequence is PTSKAAQASDLS. A compositionally biased stretch (basic and acidic residues) spans 1672–1682; that stretch reads GDFFNSPKEKG. Residue Ser1677 is modified to Phosphoserine. Polar residues-rich tracts occupy residues 1698–1715 and 1747–1756; these read VDST…TGQD and EDTSSPTSSS. The 151-residue stretch at 1786–1936 folds into the bMERB domain; sequence KQEELKRLHK…ERTQDQHFEN (151 aa).

It belongs to the Mical family. Interacts with PLXNA4. Interacts with RAB1B. Interacts with MAPK1/ERK2. Interacts with RAB35, RAB8A, RAB10, RAB13 and RAB15 (in their GTP-bound forms); binding to RAB35 is of low affinity compared to other Rab proteins; at least in case of RAB8A may bind 2 molecules of RAB8A simultaneously through a high and a low affinity binding site, respectively. May interact with MAPK1/ERK2. It depends on FAD as a cofactor.

The protein localises to the nucleus. Its subcellular location is the cytoplasm. It carries out the reaction L-methionyl-[F-actin] + NADPH + O2 + H(+) = L-methionyl-(R)-S-oxide-[F-actin] + NADP(+) + H2O. Methionine monooxygenase that promotes depolymerization of F-actin by mediating oxidation of residues 'Met-44' and 'Met-47' on actin to form methionine-sulfoxide, resulting in actin filament disassembly and preventing repolymerization. Regulates the disassembly of branched actin networks also by oxidizing ARP3B-containing ARP2/3 complexes leading to ARP3B dissociation from the network. Acts as a key regulator of the SRF signaling pathway elicited by nerve growth factor and serum: mediates oxidation and subsequent depolymerization of nuclear actin, leading to increase MKL1/MRTF-A presence in the nucleus and promote SRF:MKL1/MRTF-A-dependent gene transcription. Does not activate SRF:MKL1/MRTF-A through RhoA. This chain is [F-actin]-monooxygenase MICAL2, found in Rattus norvegicus (Rat).